Here is a 194-residue protein sequence, read N- to C-terminus: Probable GTP-binding protein EngB (194 aa).

The region spanning 22–194 is the EngB-type G domain; it reads DLPEYALAGR…AWQFIKEGME (173 aa). GTP contacts are provided by residues 30–37, 57–61, 75–78, 142–145, and 174–176; these read GRSNVGKS, GKTQT, DVPG, TKAD, and FSS. Residues serine 37 and threonine 59 each coordinate Mg(2+).

This sequence belongs to the TRAFAC class TrmE-Era-EngA-EngB-Septin-like GTPase superfamily. EngB GTPase family. Mg(2+) serves as cofactor.

In terms of biological role, necessary for normal cell division and for the maintenance of normal septation. The chain is Probable GTP-binding protein EngB from Listeria welshimeri serovar 6b (strain ATCC 35897 / DSM 20650 / CCUG 15529 / CIP 8149 / NCTC 11857 / SLCC 5334 / V8).